The primary structure comprises 357 residues: GTPase Obg (357 aa).

Residues 1-159 (MKFVDEAFID…RNLKLELKVL (159 aa)) enclose the Obg domain. An OBG-type G domain is found at 160–334 (ADVGLLGMPN…LIQAIYQHVR (175 aa)). Residues 166–173 (GMPNAGKS), 191–195 (FTTLH), 213–216 (DIPG), 284–287 (NKLD), and 315–317 (SAL) contribute to the GTP site. Mg(2+) is bound by residues Ser-173 and Thr-193.

It belongs to the TRAFAC class OBG-HflX-like GTPase superfamily. OBG GTPase family. As to quaternary structure, monomer. It depends on Mg(2+) as a cofactor.

Its subcellular location is the cytoplasm. Its function is as follows. An essential GTPase which binds GTP, GDP and possibly (p)ppGpp with moderate affinity, with high nucleotide exchange rates and a fairly low GTP hydrolysis rate. Plays a role in control of the cell cycle, stress response, ribosome biogenesis and in those bacteria that undergo differentiation, in morphogenesis control. This is GTPase Obg from Paracidovorax citrulli (strain AAC00-1) (Acidovorax citrulli).